Here is a 399-residue protein sequence, read N- to C-terminus: Tyrosine--tRNA ligase (399 aa).

The 'HIGH' region motif lies at 42–51; sequence PTAPDLHLGH. The short motif at 226–230 is the 'KMSKS' region element; it reads KMSKS. Lysine 229 contacts ATP. Residues 336–396 enclose the S4 RNA-binding domain; sequence MPIAAVLNKA…GKKAFARITL (61 aa).

Belongs to the class-I aminoacyl-tRNA synthetase family. TyrS type 2 subfamily. In terms of assembly, homodimer.

It localises to the cytoplasm. The catalysed reaction is tRNA(Tyr) + L-tyrosine + ATP = L-tyrosyl-tRNA(Tyr) + AMP + diphosphate + H(+). Functionally, catalyzes the attachment of tyrosine to tRNA(Tyr) in a two-step reaction: tyrosine is first activated by ATP to form Tyr-AMP and then transferred to the acceptor end of tRNA(Tyr). The protein is Tyrosine--tRNA ligase of Pseudomonas fluorescens (strain Pf0-1).